Consider the following 333-residue polypeptide: Fructose-1,6-bisphosphatase class 1 1 (333 aa).

Mg(2+)-binding residues include glutamate 81, aspartate 100, leucine 102, and aspartate 103. Residues 103–106 (DGSS) and asparagine 191 contribute to the substrate site. Residue glutamate 263 participates in Mg(2+) binding.

This sequence belongs to the FBPase class 1 family. As to quaternary structure, homotetramer. Mg(2+) is required as a cofactor.

It localises to the cytoplasm. It carries out the reaction beta-D-fructose 1,6-bisphosphate + H2O = beta-D-fructose 6-phosphate + phosphate. Its pathway is carbohydrate biosynthesis; Calvin cycle. This Cereibacter sphaeroides (strain ATCC 17025 / ATH 2.4.3) (Rhodobacter sphaeroides) protein is Fructose-1,6-bisphosphatase class 1 1.